We begin with the raw amino-acid sequence, 280 residues long: PsbP domain-containing protein 7, chloroplastic (280 aa).

Residues 1 to 36 (MSLKPYFSLLYSSPTNVKLSNFLIAQQPSGDLKTTP) constitute a chloroplast transit peptide.

It belongs to the PsbP family.

Its subcellular location is the plastid. The protein resides in the chloroplast. This Arabidopsis thaliana (Mouse-ear cress) protein is PsbP domain-containing protein 7, chloroplastic (PPD7).